A 179-amino-acid chain; its full sequence is ATP-dependent protease subunit HslV (179 aa).

The active site involves Thr7. Residues Gly162, Cys165, and Thr168 each contribute to the Na(+) site.

It belongs to the peptidase T1B family. HslV subfamily. As to quaternary structure, a double ring-shaped homohexamer of HslV is capped on each side by a ring-shaped HslU homohexamer. The assembly of the HslU/HslV complex is dependent on binding of ATP.

It is found in the cytoplasm. The catalysed reaction is ATP-dependent cleavage of peptide bonds with broad specificity.. With respect to regulation, allosterically activated by HslU binding. In terms of biological role, protease subunit of a proteasome-like degradation complex believed to be a general protein degrading machinery. This chain is ATP-dependent protease subunit HslV, found in Bordetella bronchiseptica (strain ATCC BAA-588 / NCTC 13252 / RB50) (Alcaligenes bronchisepticus).